The sequence spans 857 residues: Seed linoleate 9S-lipoxygenase-3 (857 aa).

A PLAT domain is found at Q38–A163. Positions T166–I857 constitute a Lipoxygenase domain. The disordered stretch occupies residues D212 to Y257. The segment covering R234–T243 has biased composition (basic residues). Residues R244–Y257 are compositionally biased toward basic and acidic residues. Residues H518, H523, H709, N713, and I857 each contribute to the Fe cation site.

This sequence belongs to the lipoxygenase family. Monomer. Requires Fe cation as cofactor.

The protein resides in the cytoplasm. It catalyses the reaction (9Z,12Z)-octadecadienoate + O2 = (9S)-hydroperoxy-(10E,12Z)-octadecadienoate. The protein operates within lipid metabolism; oxylipin biosynthesis. Functionally, plant lipoxygenase may be involved in a number of diverse aspects of plant physiology including growth and development, pest resistance, and senescence or responses to wounding. It catalyzes the hydroperoxidation of lipids containing a cis,cis-1,4-pentadiene structure. This is Seed linoleate 9S-lipoxygenase-3 (LOX1.3) from Glycine max (Soybean).